Consider the following 130-residue polypeptide: Small ribosomal subunit protein uS11c (130 aa).

It belongs to the universal ribosomal protein uS11 family. Part of the 30S ribosomal subunit.

Its subcellular location is the plastid. The protein resides in the chloroplast. This Zygnema circumcarinatum (Green alga) protein is Small ribosomal subunit protein uS11c.